A 347-amino-acid polypeptide reads, in one-letter code: D-alanine--D-alanine ligase (347 aa).

The ATP-grasp domain maps to 138-339; it reads KILCSHAGIP…YSQVIETILA (202 aa). 171-226 provides a ligand contact to ATP; it reads SDRFTFPLFVKPVDAGSSFGCTFVDFFEQLPVAIEHALQHGKSAIVEPALDAPEVF. Aspartate 296, glutamate 308, and asparagine 310 together coordinate Mg(2+).

It belongs to the D-alanine--D-alanine ligase family. The cofactor is Mg(2+). Requires Mn(2+) as cofactor.

It localises to the cytoplasm. It carries out the reaction 2 D-alanine + ATP = D-alanyl-D-alanine + ADP + phosphate + H(+). Its pathway is cell wall biogenesis; peptidoglycan biosynthesis. Cell wall formation. In Tropheryma whipplei (strain Twist) (Whipple's bacillus), this protein is D-alanine--D-alanine ligase.